The chain runs to 436 residues: Trigger factor (436 aa).

Positions 161–246 (DDRVTVDFVG…VNKVEGLSLP (86 aa)) constitute a PPIase FKBP-type domain.

This sequence belongs to the FKBP-type PPIase family. Tig subfamily.

It is found in the cytoplasm. It catalyses the reaction [protein]-peptidylproline (omega=180) = [protein]-peptidylproline (omega=0). Functionally, involved in protein export. Acts as a chaperone by maintaining the newly synthesized protein in an open conformation. Functions as a peptidyl-prolyl cis-trans isomerase. The protein is Trigger factor of Pseudoalteromonas atlantica (strain T6c / ATCC BAA-1087).